We begin with the raw amino-acid sequence, 512 residues long: Glutathione-binding protein GsiB (512 aa).

The signal sequence occupies residues 1–26 (MARAVHRSGLVALGIATALMASCAFA).

It belongs to the bacterial solute-binding protein 5 family. The complex is composed of two ATP-binding proteins (GsiA), two transmembrane proteins (GsiC and GsiD) and a solute-binding protein (GsiB).

The protein localises to the periplasm. Functionally, part of the ABC transporter complex GsiABCD involved in glutathione import. Binds glutathione. This is Glutathione-binding protein GsiB from Escherichia coli O6:K15:H31 (strain 536 / UPEC).